The chain runs to 634 residues: Chaperone protein HtpG (634 aa).

An a; substrate-binding region spans residues 1–344 (MSETATQNKE…SNDLPLNVSR (344 aa)). Residues 345–561 (EILQDNKVTQ…DFEMGTQMAK (217 aa)) form a b region. Positions 562 to 634 (LLEAAGQAAP…GAINELLTKR (73 aa)) are c.

The protein belongs to the heat shock protein 90 family. Homodimer.

It is found in the cytoplasm. Functionally, molecular chaperone. Has ATPase activity. The polypeptide is Chaperone protein HtpG (Vibrio atlanticus (strain LGP32) (Vibrio splendidus (strain Mel32))).